The following is a 321-amino-acid chain: MTKYALVGDVGGTNARLALCDIASGEISQAKTYSGLDYPSLEAVIRVYLEEHNVEVQDGCIAIACPITGDWVAMTNHTWAFSIAEMKKNLGFSHLEIINDFTAVSMAIPMLKKEHLIQFGGAEPVEGKPIAVYGAGTGLGVAHLVHVDKRWVSLPGEGGHVDFAPNSEEEGIILEILRAEIGHVSAERVLSGPGLVNLYRAIVKADNRLPENLKPKDITERALADSCTDCRRALSLFCVIMGRFGGNLALTLGTFGGVYIAGGIVPRFLEFFKASGFRAAFEDKGRFKEYVHDIPVYLIVHDNPGLLGSGAHLRQTLGHIL.

Residue 8-13 (GDVGGT) participates in ATP binding.

Belongs to the bacterial glucokinase family.

It is found in the cytoplasm. The enzyme catalyses D-glucose + ATP = D-glucose 6-phosphate + ADP + H(+). This is Glucokinase from Escherichia fergusonii (strain ATCC 35469 / DSM 13698 / CCUG 18766 / IAM 14443 / JCM 21226 / LMG 7866 / NBRC 102419 / NCTC 12128 / CDC 0568-73).